The sequence spans 258 residues: Pyridoxine 5'-phosphate synthase (258 aa).

Asn16 is a 3-amino-2-oxopropyl phosphate binding site. A 1-deoxy-D-xylulose 5-phosphate-binding site is contributed by 18–19 (DH). Arg27 is a binding site for 3-amino-2-oxopropyl phosphate. His52 acts as the Proton acceptor in catalysis. 1-deoxy-D-xylulose 5-phosphate is bound by residues Arg54 and His59. Catalysis depends on Glu79, which acts as the Proton acceptor. Thr109 is a binding site for 1-deoxy-D-xylulose 5-phosphate. His200 serves as the catalytic Proton donor. Residues Gly201 and 222 to 223 (GH) contribute to the 3-amino-2-oxopropyl phosphate site.

This sequence belongs to the PNP synthase family. In terms of assembly, homooctamer; tetramer of dimers.

The protein resides in the cytoplasm. The catalysed reaction is 3-amino-2-oxopropyl phosphate + 1-deoxy-D-xylulose 5-phosphate = pyridoxine 5'-phosphate + phosphate + 2 H2O + H(+). It functions in the pathway cofactor biosynthesis; pyridoxine 5'-phosphate biosynthesis; pyridoxine 5'-phosphate from D-erythrose 4-phosphate: step 5/5. Functionally, catalyzes the complicated ring closure reaction between the two acyclic compounds 1-deoxy-D-xylulose-5-phosphate (DXP) and 3-amino-2-oxopropyl phosphate (1-amino-acetone-3-phosphate or AAP) to form pyridoxine 5'-phosphate (PNP) and inorganic phosphate. The sequence is that of Pyridoxine 5'-phosphate synthase from Burkholderia lata (strain ATCC 17760 / DSM 23089 / LMG 22485 / NCIMB 9086 / R18194 / 383).